A 105-amino-acid polypeptide reads, in one-letter code: Nitrogen fixation nifHD region GlnB-like protein 1 (105 aa).

This sequence belongs to the P(II) protein family.

Functionally, could be involved in the regulation of nitrogen fixation. The chain is Nitrogen fixation nifHD region GlnB-like protein 1 (glnBA) from Methanothermobacter marburgensis (strain ATCC BAA-927 / DSM 2133 / JCM 14651 / NBRC 100331 / OCM 82 / Marburg) (Methanobacterium thermoautotrophicum).